Consider the following 456-residue polypeptide: Enolase (456 aa).

Gln164 contributes to the (2R)-2-phosphoglycerate binding site. Glu207 functions as the Proton donor in the catalytic mechanism. Asp244, Glu287, and Asp314 together coordinate Mg(2+). (2R)-2-phosphoglycerate-binding residues include Lys339, Arg368, Ser369, and Lys390. Catalysis depends on Lys339, which acts as the Proton acceptor.

It belongs to the enolase family. In terms of assembly, component of the RNA degradosome, a multiprotein complex involved in RNA processing and mRNA degradation. The cofactor is Mg(2+).

It is found in the cytoplasm. Its subcellular location is the secreted. It localises to the cell surface. The enzyme catalyses (2R)-2-phosphoglycerate = phosphoenolpyruvate + H2O. It participates in carbohydrate degradation; glycolysis; pyruvate from D-glyceraldehyde 3-phosphate: step 4/5. Its function is as follows. Catalyzes the reversible conversion of 2-phosphoglycerate (2-PG) into phosphoenolpyruvate (PEP). It is essential for the degradation of carbohydrates via glycolysis. This chain is Enolase, found in Francisella tularensis subsp. novicida (strain U112).